Reading from the N-terminus, the 470-residue chain is Argininosuccinate lyase (470 aa).

Belongs to the lyase 1 family. Argininosuccinate lyase subfamily.

The protein resides in the cytoplasm. The catalysed reaction is 2-(N(omega)-L-arginino)succinate = fumarate + L-arginine. Its pathway is amino-acid biosynthesis; L-arginine biosynthesis; L-arginine from L-ornithine and carbamoyl phosphate: step 3/3. In Ehrlichia chaffeensis (strain ATCC CRL-10679 / Arkansas), this protein is Argininosuccinate lyase.